We begin with the raw amino-acid sequence, 429 residues long: Enolase (429 aa).

Residue Q162 participates in (2R)-2-phosphoglycerate binding. E204 functions as the Proton donor in the catalytic mechanism. Positions 242, 289, and 316 each coordinate Mg(2+). The (2R)-2-phosphoglycerate site is built by K341, R370, S371, and K392. K341 (proton acceptor) is an active-site residue.

It belongs to the enolase family. Requires Mg(2+) as cofactor.

The protein resides in the cytoplasm. Its subcellular location is the secreted. It localises to the cell surface. It catalyses the reaction (2R)-2-phosphoglycerate = phosphoenolpyruvate + H2O. It participates in carbohydrate degradation; glycolysis; pyruvate from D-glyceraldehyde 3-phosphate: step 4/5. Catalyzes the reversible conversion of 2-phosphoglycerate (2-PG) into phosphoenolpyruvate (PEP). It is essential for the degradation of carbohydrates via glycolysis. The sequence is that of Enolase from Flavobacterium psychrophilum (strain ATCC 49511 / DSM 21280 / CIP 103535 / JIP02/86).